The chain runs to 362 residues: MYSASVTAPVNIATLKYWGKRDKSLNLPTNSSISVTLSQDDLRTLTTASASESFEKDQLWLNGKLESLDTPRTQACLADLRKLRASIEQSPDTPKLSQMKLHIVSENNFPTAAGLASSAAGFAALVSAIAKLYELPQDMSELSKIARKGSGSACRSLFGGFVAWEMGTLPDGQDSKAVEIAPLEHWPSLRAVILVVSDDKKDTPSTTGMQSTVATSDLFAHRIAEVVPQRFEAMKKAILDKDFPKFAELTMKDSNSFHAVCLDSYPPIFYLNDTSKKIIKMVETINQQEVVAAYTFDAGPNAVIYYDEANQDKVLSLLYKHFGHVPGWKTHYTAETPVAGVSRIIQTSIGPGPQETSESLTK.

(R)-5-diphosphomevalonate is bound by residues 17–20, Arg72, 150–155, and Thr206; these read YWGK and SGSACR.

This sequence belongs to the diphosphomevalonate decarboxylase family. As to quaternary structure, homodimer.

The enzyme catalyses (R)-5-diphosphomevalonate + ATP = isopentenyl diphosphate + ADP + phosphate + CO2. It functions in the pathway isoprenoid biosynthesis; isopentenyl diphosphate biosynthesis via mevalonate pathway; isopentenyl diphosphate from (R)-mevalonate: step 3/3. In terms of biological role, diphosphomevalonate decarboxylase; part of the second module of ergosterol biosynthesis pathway that includes the middle steps of the pathway. MVD1 converts diphosphomevalonate into isopentenyl diphosphate. The second module is carried out in the vacuole and involves the formation of farnesyl diphosphate, which is also an important intermediate in the biosynthesis of ubiquinone, dolichol, heme and prenylated proteins. Activity by the mevalonate kinase ERG12 first converts mevalonate into 5-phosphomevalonate. 5-phosphomevalonate is then further converted to 5-diphosphomevalonate by the phosphomevalonate kinase ERG8. The diphosphomevalonate decarboxylase MVD then produces isopentenyl diphosphate. The isopentenyl-diphosphate delta-isomerase IDI1 then catalyzes the 1,3-allylic rearrangement of the homoallylic substrate isopentenyl (IPP) to its highly electrophilic allylic isomer, dimethylallyl diphosphate (DMAPP). Finally the farnesyl diphosphate synthase ERG20 catalyzes the sequential condensation of isopentenyl pyrophosphate with dimethylallyl pyrophosphate, and then with the resultant geranylpyrophosphate to the ultimate product farnesyl pyrophosphate. The polypeptide is Diphosphomevalonate decarboxylase (Candida albicans (strain SC5314 / ATCC MYA-2876) (Yeast)).